We begin with the raw amino-acid sequence, 271 residues long: Thiazole synthase (271 aa).

Lysine 108 serves as the catalytic Schiff-base intermediate with DXP. 1-deoxy-D-xylulose 5-phosphate is bound by residues glycine 169, 195 to 196 (AG), and 217 to 218 (NS).

Belongs to the ThiG family. In terms of assembly, homotetramer. Forms heterodimers with either ThiH or ThiS.

It localises to the cytoplasm. It catalyses the reaction [ThiS sulfur-carrier protein]-C-terminal-Gly-aminoethanethioate + 2-iminoacetate + 1-deoxy-D-xylulose 5-phosphate = [ThiS sulfur-carrier protein]-C-terminal Gly-Gly + 2-[(2R,5Z)-2-carboxy-4-methylthiazol-5(2H)-ylidene]ethyl phosphate + 2 H2O + H(+). It functions in the pathway cofactor biosynthesis; thiamine diphosphate biosynthesis. Functionally, catalyzes the rearrangement of 1-deoxy-D-xylulose 5-phosphate (DXP) to produce the thiazole phosphate moiety of thiamine. Sulfur is provided by the thiocarboxylate moiety of the carrier protein ThiS. In vitro, sulfur can be provided by H(2)S. In Prochlorococcus marinus (strain SARG / CCMP1375 / SS120), this protein is Thiazole synthase.